We begin with the raw amino-acid sequence, 162 residues long: NADH-quinone oxidoreductase subunit I (162 aa).

4Fe-4S ferredoxin-type domains follow at residues 52-82 (LRRY…IEAG) and 93-122 (TRYD…EGPN). [4Fe-4S] cluster contacts are provided by Cys-62, Cys-65, Cys-68, Cys-72, Cys-102, Cys-105, Cys-108, and Cys-112.

Belongs to the complex I 23 kDa subunit family. In terms of assembly, NDH-1 is composed of 14 different subunits. Subunits NuoA, H, J, K, L, M, N constitute the membrane sector of the complex. The cofactor is [4Fe-4S] cluster.

The protein resides in the cell inner membrane. The enzyme catalyses a quinone + NADH + 5 H(+)(in) = a quinol + NAD(+) + 4 H(+)(out). In terms of biological role, NDH-1 shuttles electrons from NADH, via FMN and iron-sulfur (Fe-S) centers, to quinones in the respiratory chain. The immediate electron acceptor for the enzyme in this species is believed to be ubiquinone. Couples the redox reaction to proton translocation (for every two electrons transferred, four hydrogen ions are translocated across the cytoplasmic membrane), and thus conserves the redox energy in a proton gradient. In Xanthobacter autotrophicus (strain ATCC BAA-1158 / Py2), this protein is NADH-quinone oxidoreductase subunit I.